The chain runs to 268 residues: Ribosomal RNA small subunit methyltransferase A (268 aa).

Asn-23, Ile-25, Gly-50, Glu-72, Asp-97, and Asn-116 together coordinate S-adenosyl-L-methionine.

This sequence belongs to the class I-like SAM-binding methyltransferase superfamily. rRNA adenine N(6)-methyltransferase family. RsmA subfamily.

It localises to the cytoplasm. It catalyses the reaction adenosine(1518)/adenosine(1519) in 16S rRNA + 4 S-adenosyl-L-methionine = N(6)-dimethyladenosine(1518)/N(6)-dimethyladenosine(1519) in 16S rRNA + 4 S-adenosyl-L-homocysteine + 4 H(+). Functionally, specifically dimethylates two adjacent adenosines (A1518 and A1519) in the loop of a conserved hairpin near the 3'-end of 16S rRNA in the 30S particle. May play a critical role in biogenesis of 30S subunits. The protein is Ribosomal RNA small subunit methyltransferase A of Rickettsia bellii (strain RML369-C).